The chain runs to 467 residues: Probable protein phosphatase 2C 55 (467 aa).

The PPM-type phosphatase domain occupies Ser-222–Val-458. The Mn(2+) site is built by Asp-252, Gly-253, Asp-383, and Asp-449.

The protein belongs to the PP2C family. The cofactor is Mg(2+). Requires Mn(2+) as cofactor.

The catalysed reaction is O-phospho-L-seryl-[protein] + H2O = L-seryl-[protein] + phosphate. It carries out the reaction O-phospho-L-threonyl-[protein] + H2O = L-threonyl-[protein] + phosphate. The sequence is that of Probable protein phosphatase 2C 55 from Arabidopsis thaliana (Mouse-ear cress).